A 205-amino-acid chain; its full sequence is Protein N-terminal glutamine amidohydrolase (205 aa).

Residues cysteine 20, histidine 74, and aspartate 90 contribute to the active site.

This sequence belongs to the NTAQ1 family. In terms of assembly, monomer.

It catalyses the reaction N-terminal L-glutaminyl-[protein] + H2O = N-terminal L-glutamyl-[protein] + NH4(+). Functionally, mediates the side-chain deamidation of N-terminal glutamine residues to glutamate, an important step in N-end rule pathway of protein degradation. Conversion of the resulting N-terminal glutamine to glutamate renders the protein susceptible to arginylation, polyubiquitination and degradation as specified by the N-end rule. Does not act on substrates with internal or C-terminal glutamine and does not act on non-glutamine residues in any position. The chain is Protein N-terminal glutamine amidohydrolase (tun) from Drosophila virilis (Fruit fly).